A 475-amino-acid polypeptide reads, in one-letter code: Ribulose bisphosphate carboxylase large chain (475 aa).

Residues 1–2 (MV) constitute a propeptide that is removed on maturation. Position 3 is an N-acetylproline (Pro-3). Lys-14 is subject to N6,N6,N6-trimethyllysine. 2 residues coordinate substrate: Asn-123 and Thr-173. Lys-175 serves as the catalytic Proton acceptor. Lys-177 contacts substrate. Residues Lys-201, Asp-203, and Glu-204 each coordinate Mg(2+). Lys-201 is subject to N6-carboxylysine. Residue His-294 is the Proton acceptor of the active site. Arg-295, His-327, and Ser-379 together coordinate substrate.

Belongs to the RuBisCO large chain family. Type I subfamily. In terms of assembly, heterohexadecamer of 8 large chains and 8 small chains; disulfide-linked. The disulfide link is formed within the large subunit homodimers. It depends on Mg(2+) as a cofactor. The disulfide bond which can form in the large chain dimeric partners within the hexadecamer appears to be associated with oxidative stress and protein turnover.

The protein resides in the plastid. The protein localises to the chloroplast. It catalyses the reaction 2 (2R)-3-phosphoglycerate + 2 H(+) = D-ribulose 1,5-bisphosphate + CO2 + H2O. It carries out the reaction D-ribulose 1,5-bisphosphate + O2 = 2-phosphoglycolate + (2R)-3-phosphoglycerate + 2 H(+). RuBisCO catalyzes two reactions: the carboxylation of D-ribulose 1,5-bisphosphate, the primary event in carbon dioxide fixation, as well as the oxidative fragmentation of the pentose substrate in the photorespiration process. Both reactions occur simultaneously and in competition at the same active site. The polypeptide is Ribulose bisphosphate carboxylase large chain (Tetradesmus obliquus (Green alga)).